Consider the following 249-residue polypeptide: Bis(5'-nucleosyl)-tetraphosphatase PrpE [asymmetrical] (249 aa).

The protein belongs to the PrpE family. Ni(2+) is required as a cofactor.

The enzyme catalyses P(1),P(4)-bis(5'-guanosyl) tetraphosphate + H2O = GMP + GTP + 2 H(+). In terms of biological role, asymmetrically hydrolyzes Ap4p to yield AMP and ATP. This Bacillus velezensis (strain DSM 23117 / BGSC 10A6 / LMG 26770 / FZB42) (Bacillus amyloliquefaciens subsp. plantarum) protein is Bis(5'-nucleosyl)-tetraphosphatase PrpE [asymmetrical].